The sequence spans 158 residues: 6,7-dimethyl-8-ribityllumazine synthase (158 aa).

5-amino-6-(D-ribitylamino)uracil contacts are provided by residues F23, 61–63 (SFE), and 85–87 (AVI). Position 90–91 (90–91 (ET)) interacts with (2S)-2-hydroxy-3-oxobutyl phosphate. H93 serves as the catalytic Proton donor. F118 provides a ligand contact to 5-amino-6-(D-ribitylamino)uracil. R132 is a binding site for (2S)-2-hydroxy-3-oxobutyl phosphate.

Belongs to the DMRL synthase family.

It catalyses the reaction (2S)-2-hydroxy-3-oxobutyl phosphate + 5-amino-6-(D-ribitylamino)uracil = 6,7-dimethyl-8-(1-D-ribityl)lumazine + phosphate + 2 H2O + H(+). It participates in cofactor biosynthesis; riboflavin biosynthesis; riboflavin from 2-hydroxy-3-oxobutyl phosphate and 5-amino-6-(D-ribitylamino)uracil: step 1/2. Its function is as follows. Catalyzes the formation of 6,7-dimethyl-8-ribityllumazine by condensation of 5-amino-6-(D-ribitylamino)uracil with 3,4-dihydroxy-2-butanone 4-phosphate. This is the penultimate step in the biosynthesis of riboflavin. In Prochlorococcus marinus subsp. pastoris (strain CCMP1986 / NIES-2087 / MED4), this protein is 6,7-dimethyl-8-ribityllumazine synthase.